The primary structure comprises 379 residues: MKKHVMLVKPFSLEDEKDSENTPPNLIQRILSLFKNVRPGSDLTNFQLPPQMNLARSQLQCYGEIVYSFDGHDLLGECSRRDKPIERMKAMVTWYISTLRPLIFGLAPYNPVIGETHHVSNGHINVLAEQISHHPPVSALHATHEKENVDVLLCQYFTPKFRGAYVDVEVKGKRVVKLLNHKETYEMNQPKLLMTFLPAMGAHWAGKIVIKCPETGLGAELQLLSDSFLSRFTGNNKRAIKGKIFESSSRKQLYEISGHWDRTVTAKNTKTGQLEVIYKASENIAKLKTPIVENLQEVSESESAVVWGEVSEGIVTNNWEKAREAKRDVEEKQRESLRKRKASGQSWIPKHFSVARTGKDWDCVPLQPTVPRAPIVVPL.

It belongs to the OSBP family. As to expression, expressed in flowers.

May be involved in the transport of sterols. The sequence is that of Oxysterol-binding protein-related protein 4C (ORP4C) from Arabidopsis thaliana (Mouse-ear cress).